A 290-amino-acid polypeptide reads, in one-letter code: Acetyl-coenzyme A carboxylase carboxyl transferase subunit beta (290 aa).

Positions 29–290 (LWGKCPECSQ…RLHGYREKRK (262 aa)) constitute a CoA carboxyltransferase N-terminal domain. 4 residues coordinate Zn(2+): Cys33, Cys36, Cys52, and Cys55. A C4-type zinc finger spans residues 33 to 55 (CPECSQVVYRKDLLENANVCSNC).

It belongs to the AccD/PCCB family. In terms of assembly, acetyl-CoA carboxylase is a heterohexamer composed of biotin carboxyl carrier protein (AccB), biotin carboxylase (AccC) and two subunits each of ACCase subunit alpha (AccA) and ACCase subunit beta (AccD). The cofactor is Zn(2+).

Its subcellular location is the cytoplasm. The enzyme catalyses N(6)-carboxybiotinyl-L-lysyl-[protein] + acetyl-CoA = N(6)-biotinyl-L-lysyl-[protein] + malonyl-CoA. It functions in the pathway lipid metabolism; malonyl-CoA biosynthesis; malonyl-CoA from acetyl-CoA: step 1/1. Functionally, component of the acetyl coenzyme A carboxylase (ACC) complex. Biotin carboxylase (BC) catalyzes the carboxylation of biotin on its carrier protein (BCCP) and then the CO(2) group is transferred by the transcarboxylase to acetyl-CoA to form malonyl-CoA. The protein is Acetyl-coenzyme A carboxylase carboxyl transferase subunit beta of Prochlorococcus marinus (strain MIT 9211).